We begin with the raw amino-acid sequence, 242 residues long: Host range factor p28 (242 aa).

The region spanning 21 to 131 (YIDEPNDIRL…QSILRGLVNW (111 aa)) is the KilA-N domain. The RING-type zinc finger occupies 173-226 (CGICYEVVYSKRLENDRYFGLLDSCNHIFCITCINIWHRTRRETGASDNCPICR).

This sequence belongs to the orthopoxvirus OPG021 family.

Its subcellular location is the host cytoplasm. It catalyses the reaction S-ubiquitinyl-[E2 ubiquitin-conjugating enzyme]-L-cysteine + [acceptor protein]-L-lysine = [E2 ubiquitin-conjugating enzyme]-L-cysteine + N(6)-ubiquitinyl-[acceptor protein]-L-lysine.. In terms of biological role, RING-finger E3 ubiquitin ligase which catalyzes the formation of both 'Lys-48'- and 'Lys-63'-linked polyubiquitin chains. Plays an important role in virulence by acting as an anti-apoptotic factor. The polypeptide is Host range factor p28 (OPG021) (Monkeypox virus).